We begin with the raw amino-acid sequence, 1180 residues long: Tudor domain-containing protein 1 (1180 aa).

Disordered regions lie at residues 1–66 (MSVK…KKNN) and 79–138 (SQED…RPAK). The span at 27-41 (NFEKNENKLPPHESL) shows a compositional bias: basic and acidic residues. Composition is skewed to polar residues over residues 79 to 91 (SQED…NPNG) and 110 to 122 (NSVS…SNSP). The Zn(2+) site is built by C170, C173, C181, C184, C190, C194, H202, and C206. The segment at 170–206 (CHRCGLFGSLRCSQCKQTYYCSTACQRRDWSAHSIVC) adopts an MYND-type zinc-finger fold. Residues 312 to 372 (IPVKGEVCIA…YHLNRNIDLF (61 aa)) form the Tudor 1 domain. The segment at 450–469 (SGQDSKKENADQSDPEDVGK) is disordered. 3 consecutive Tudor domains span residues 541–600 (YPAI…LLEL), 762–821 (KAEI…FLNL), and 990–1048 (RPRI…HLAL).

This sequence belongs to the TDRD1 family. As to quaternary structure, found in a mRNP complex, at least composed of TDRD1, TDRD6, TDRD7 and DDX4. Interacts with MAEL. Interacts with PIWIL1, PIWIL2 and PIWIL4 (when methylated on arginine residues). Interacts with TDRD12. As to expression, testis and ovary specific. Also expressed in several cancers.

Its subcellular location is the cytoplasm. Functionally, plays a central role during spermatogenesis by participating in the repression transposable elements and preventing their mobilization, which is essential for the germline integrity. Acts via the piRNA metabolic process, which mediates the repression of transposable elements during meiosis by forming complexes composed of piRNAs and Piwi proteins and governs the methylation and subsequent repression of transposons. Required for the localization of Piwi proteins to the meiotic nuage. Involved in the piRNA metabolic process by ensuring the entry of correct transcripts into the normal piRNA pool and limiting the entry of cellular transcripts into the piRNA pathway. May act by allowing the recruitment of piRNA biogenesis or loading factors that ensure the correct entry of transcripts and piRNAs into Piwi proteins. This is Tudor domain-containing protein 1 (TDRD1) from Homo sapiens (Human).